A 121-amino-acid polypeptide reads, in one-letter code: MPILPKYESFWAFLLIACLIPVLAISVSNLVAPSTSKNPEKSTTYESGIEPMGESWIQFQIRYYMFALVFVIFDVETVFLYPWAMSFDDLGIIAFAEVLVFVIILIIGLIYAWRKGALEWS.

3 helical membrane-spanning segments follow: residues 10 to 30 (FWAF…VSNL), 65 to 85 (MFAL…PWAM), and 90 to 110 (LGII…IGLI).

It belongs to the complex I subunit 3 family. NDH is composed of at least 16 different subunits, 5 of which are encoded in the nucleus.

Its subcellular location is the plastid. The protein localises to the chloroplast thylakoid membrane. It catalyses the reaction a plastoquinone + NADH + (n+1) H(+)(in) = a plastoquinol + NAD(+) + n H(+)(out). The catalysed reaction is a plastoquinone + NADPH + (n+1) H(+)(in) = a plastoquinol + NADP(+) + n H(+)(out). Its function is as follows. NDH shuttles electrons from NAD(P)H:plastoquinone, via FMN and iron-sulfur (Fe-S) centers, to quinones in the photosynthetic chain and possibly in a chloroplast respiratory chain. The immediate electron acceptor for the enzyme in this species is believed to be plastoquinone. Couples the redox reaction to proton translocation, and thus conserves the redox energy in a proton gradient. This chain is NAD(P)H-quinone oxidoreductase subunit 3, chloroplastic, found in Staurastrum punctulatum (Green alga).